We begin with the raw amino-acid sequence, 147 residues long: Hemoglobin subunit beta-H0 (147 aa).

Residues 3–147 enclose the Globin domain; it reads HFTAEEKAAI…VATALSHKYH (145 aa). Positions 64 and 93 each coordinate heme b.

The protein belongs to the globin family. In terms of assembly, heterotetramer of two alpha chains and two beta chains. Red blood cells.

In terms of biological role, this is a minor early embryonic beta chain. This Mus musculus (Mouse) protein is Hemoglobin subunit beta-H0 (Hbb-bh0).